A 101-amino-acid chain; its full sequence is Thioredoxin 1 (101 aa).

One can recognise a Thioredoxin domain in the interval 2–101 (AQTLDDLIRT…MRQEVLKAIG (100 aa)). An intrachain disulfide couples C25 to C28.

The protein belongs to the thioredoxin family.

Functionally, participates in various redox reactions through the reversible oxidation of its active center dithiol to a disulfide and catalyzes dithiol-disulfide exchange reactions. This is Thioredoxin 1 (trx1) from Chlorobaculum tepidum (strain ATCC 49652 / DSM 12025 / NBRC 103806 / TLS) (Chlorobium tepidum).